The chain runs to 610 residues: DEAD-box ATP-dependent RNA helicase 9, mitochondrial (610 aa).

A mitochondrion-targeting transit peptide spans 1 to 66 (MISTVLRRSI…SSPFGVKVRD (66 aa)). The Q motif motif lies at 116 to 144 (LAIADLGISPEIVKALKGRGIEKLFPIQK). The region spanning 147-321 (LEPAMEGRDM…KKYLNNPLTI (175 aa)) is the Helicase ATP-binding domain. 160-167 (ARTGTGKT) is an ATP binding site. A DEAD box motif is present at residues 269–272 (DEAD). The region spanning 350 to 494 (IIGPLVKEHG…ELPSIAVERG (145 aa)) is the Helicase C-terminal domain. A compositionally biased stretch (gly residues) spans 542-557 (SGRSGGGGGSYGGSGG). Residues 542–610 (SGRSGGGGGS…FGSNDGKRSY (69 aa)) are disordered. Residues 558–572 (SSSRYSGGSDRSSGF) show a composition bias toward low complexity. Over residues 573–585 (GSFGSGGSSGGFG) the composition is skewed to gly residues. Positions 586-596 (SDRSSQSSGRS) are enriched in low complexity.

This sequence belongs to the DEAD box helicase family. DDX21/DDX50 subfamily.

It localises to the mitochondrion. The enzyme catalyses ATP + H2O = ADP + phosphate + H(+). The chain is DEAD-box ATP-dependent RNA helicase 9, mitochondrial (RH9) from Arabidopsis thaliana (Mouse-ear cress).